Reading from the N-terminus, the 364-residue chain is tRNA 2-selenouridine synthase (364 aa).

Residues 14-137 enclose the Rhodanese domain; the sequence is LIADTPIIDV…LRQTAIQATI (124 aa). Cysteine 97 acts as the S-selanylcysteine intermediate in catalysis.

This sequence belongs to the SelU family. In terms of assembly, monomer.

The enzyme catalyses 5-methylaminomethyl-2-thiouridine(34) in tRNA + selenophosphate + (2E)-geranyl diphosphate + H2O + H(+) = 5-methylaminomethyl-2-selenouridine(34) in tRNA + (2E)-thiogeraniol + phosphate + diphosphate. The catalysed reaction is 5-methylaminomethyl-2-thiouridine(34) in tRNA + (2E)-geranyl diphosphate = 5-methylaminomethyl-S-(2E)-geranyl-thiouridine(34) in tRNA + diphosphate. It catalyses the reaction 5-methylaminomethyl-S-(2E)-geranyl-thiouridine(34) in tRNA + selenophosphate + H(+) = 5-methylaminomethyl-2-(Se-phospho)selenouridine(34) in tRNA + (2E)-thiogeraniol. It carries out the reaction 5-methylaminomethyl-2-(Se-phospho)selenouridine(34) in tRNA + H2O = 5-methylaminomethyl-2-selenouridine(34) in tRNA + phosphate. Its function is as follows. Involved in the post-transcriptional modification of the uridine at the wobble position (U34) of tRNA(Lys), tRNA(Glu) and tRNA(Gln). Catalyzes the conversion of 2-thiouridine (S2U-RNA) to 2-selenouridine (Se2U-RNA). Acts in a two-step process involving geranylation of 2-thiouridine (S2U) to S-geranyl-2-thiouridine (geS2U) and subsequent selenation of the latter derivative to 2-selenouridine (Se2U) in the tRNA chain. This is tRNA 2-selenouridine synthase from Shigella flexneri serotype 5b (strain 8401).